Here is a 222-residue protein sequence, read N- to C-terminus: Charged multivesicular body protein 2a (222 aa).

An N-acetylmethionine modification is found at Met1. A coiled-coil region spans residues 12-53; sequence EELLRQNQRALNRAMRELDRERQKLETQEKKIIADIKKMAKQ. Positions 56–222 are interaction with VPS4B; sequence MDAVRIMAKD…EERLKNLRRD (167 aa). Residues 179–188 are compositionally biased toward polar residues; that stretch reads LSNLPSTGGS. Residues 179-198 are disordered; that stretch reads LSNLPSTGGSLSVAAGGKKA. Ser184 carries the post-translational modification Phosphoserine. A Phosphothreonine modification is found at Thr185. 3 positions are modified to phosphoserine: Ser188, Ser190, and Ser203. The stretch at 195–222 forms a coiled coil; sequence GKKAEATASALADADADLEERLKNLRRD. The MIT-interacting motif signature appears at 210–220; that stretch reads ADLEERLKNLR. The interaction with VTA1 stretch occupies residues 217-222; it reads KNLRRD.

It belongs to the SNF7 family. In terms of assembly, probable core component of the endosomal sorting required for transport complex III (ESCRT-III). ESCRT-III components are thought to multimerize to form a flat lattice on the perimeter membrane of the endosome. Several assembly forms of ESCRT-III may exist that interact and act sequentially. In vitro, heteromerizes with CHMP3 (but not CHMP4) to form helical tubular structures that expose membrane-interacting sites on the outside whereas VPS4B can associate on the inside of the tubule. Interacts with CHMP1B, CHMP2B, CHMP3, CHMP4A, CHMP4B, CHMP4C and CHMP5. Interacts with VPS4A; the interaction is direct. Interacts with VPS4B; the interaction is direct. Interacts with MITD1. Interacts with VTA1; the interaction probably involves the open conformation of CHMP2A. Post-translationally, ISGylated in a CHMP5-dependent manner. Isgylation weakens and inhibits its interactions with VPS4A and VTA1 respectively. Widely expressed. Highly expressed in brain, heart, liver and kidney.

It is found in the late endosome membrane. The protein localises to the cytoplasm. Its subcellular location is the nucleus envelope. Functionally, probable core component of the endosomal sorting required for transport complex III (ESCRT-III) which is involved in multivesicular bodies (MVBs) formation and sorting of endosomal cargo proteins into MVBs. MVBs contain intraluminal vesicles (ILVs) that are generated by invagination and scission from the limiting membrane of the endosome and mostly are delivered to lysosomes enabling degradation of membrane proteins, such as stimulated growth factor receptors, lysosomal enzymes and lipids. The MVB pathway appears to require the sequential function of ESCRT-O, -I,-II and -III complexes. ESCRT-III proteins mostly dissociate from the invaginating membrane before the ILV is released. The ESCRT machinery also functions in topologically equivalent membrane fission events, such as the terminal stages of cytokinesis. Together with SPAST, the ESCRT-III complex promotes nuclear envelope sealing and mitotic spindle disassembly during late anaphase. Recruited to the reforming nuclear envelope (NE) during anaphase by LEMD2. ESCRT-III proteins are believed to mediate the necessary vesicle extrusion and/or membrane fission activities, possibly in conjunction with the AAA ATPase VPS4. The protein is Charged multivesicular body protein 2a (Chmp2a) of Mus musculus (Mouse).